We begin with the raw amino-acid sequence, 104 residues long: Small ubiquitin-related modifier 3 (104 aa).

Residues K5 and K7 each participate in a glycyl lysine isopeptide (Lys-Gly) (interchain with G-Cter in SUMO2) cross-link. A Glycyl lysine isopeptide (Lys-Gly) (interchain with G-Cter in SUMO); alternate cross-link involves residue K11. Residue K11 forms a Glycyl lysine isopeptide (Lys-Gly) (interchain with G-Cter in SUMO2); alternate linkage. Positions 15–92 (DHINLKVAGQ…IDVFQQQTGG (78 aa)) constitute a Ubiquitin-like domain. G92 participates in a covalent cross-link: Glycyl lysine isopeptide (Gly-Lys) (interchain with K-? in acceptor proteins). The propeptide occupies 93 to 104 (SRVASCLLGSGL).

It belongs to the ubiquitin family. SUMO subfamily. As to quaternary structure, interacts with SAE2 and UBE2I. Covalently attached to a number of proteins. Interacts with USP25 (via ts SIM domain); the interaction sumoylates USP25 and inhibits its ubiquitin hydrolyzing activity. Interacts with BMAL1. Post-translationally, polymeric chains can be formed through Lys-11 cross-linking. Cleavage of precursor form by SENP1, SENP2 or SENP5 is necessary for function.

The protein localises to the cytoplasm. Its subcellular location is the nucleus. It is found in the PML body. In terms of biological role, ubiquitin-like protein which can be covalently attached to target lysines either as a monomer or as a lysine-linked polymer. Does not seem to be involved in protein degradation and may function as an antagonist of ubiquitin in the degradation process. Plays a role in a number of cellular processes such as nuclear transport, DNA replication and repair, mitosis and signal transduction. Covalent attachment to its substrates requires prior activation by the E1 complex SAE1-SAE2 and linkage to the E2 enzyme UBE2I, and can be promoted by an E3 ligase such as PIAS1-4, RANBP2 or CBX4. Plays a role in the regulation of sumoylation status of SETX. This is Small ubiquitin-related modifier 3 (SUMO3) from Bos taurus (Bovine).